A 444-amino-acid polypeptide reads, in one-letter code: MKHFEANFDGLVGPTHNYAGLSFGNVASLNNAALVSNPKAAAKQGLQKAKALADLGMIQGMLAPQERPDLNTLRRIGFSGSDAQVLQQAAKTAPALLNACCSASSMWTANAATVSPSADTRDGKLHFTPANLVDKLHRSIEPTTTGRILTATFNDPHYFHHHNHLPEHNSFGDEGAANHTRLCQEYGHAGVELFVYGQEATNPNAPRPQKYPARQTLEASMAIARLHQLEEDNCVFIQQNPDVIDQGVFHNDVIAVGNQNVLFYHEQAFLNTQAKLDEIRRKLDTELFFIEVPTTKVAINNAVKSYLFNTQIITLPSGEMAIIAPTDCQENPAVYAYLNELLTLNTPIKQVLYFDVKQSMQNGGGPACLRLRVAMNEREVAAANQHTLLNDALFARLNTWVDKHYRDRLSTQDLADPQLVVESRTALDELTQIMKLGSVYPFQR.

Residues 19–28 (AGLSFGNVAS), Asn110, and 137–138 (HR) each bind substrate. Residue Glu174 is part of the active site. A substrate-binding site is contributed by Arg214. Residue His250 is part of the active site. 2 residues coordinate substrate: Asp252 and Asn362. The active-site Nucleophile is Cys368.

The protein belongs to the succinylarginine dihydrolase family. In terms of assembly, homodimer.

It catalyses the reaction N(2)-succinyl-L-arginine + 2 H2O + 2 H(+) = N(2)-succinyl-L-ornithine + 2 NH4(+) + CO2. The protein operates within amino-acid degradation; L-arginine degradation via AST pathway; L-glutamate and succinate from L-arginine: step 2/5. Functionally, catalyzes the hydrolysis of N(2)-succinylarginine into N(2)-succinylornithine, ammonia and CO(2). In Shewanella sp. (strain ANA-3), this protein is N-succinylarginine dihydrolase.